A 349-amino-acid polypeptide reads, in one-letter code: Phenylalanine--tRNA ligase alpha subunit (349 aa).

Glu-258 is a binding site for Mg(2+).

The protein belongs to the class-II aminoacyl-tRNA synthetase family. Phe-tRNA synthetase alpha subunit type 1 subfamily. In terms of assembly, tetramer of two alpha and two beta subunits. Mg(2+) is required as a cofactor.

The protein localises to the cytoplasm. It carries out the reaction tRNA(Phe) + L-phenylalanine + ATP = L-phenylalanyl-tRNA(Phe) + AMP + diphosphate + H(+). The chain is Phenylalanine--tRNA ligase alpha subunit from Rickettsia felis (strain ATCC VR-1525 / URRWXCal2) (Rickettsia azadi).